A 179-amino-acid polypeptide reads, in one-letter code: Large ribosomal subunit protein uL10 (179 aa).

This sequence belongs to the universal ribosomal protein uL10 family. Part of the ribosomal stalk of the 50S ribosomal subunit. The N-terminus interacts with L11 and the large rRNA to form the base of the stalk. The C-terminus forms an elongated spine to which L12 dimers bind in a sequential fashion forming a multimeric L10(L12)X complex.

Forms part of the ribosomal stalk, playing a central role in the interaction of the ribosome with GTP-bound translation factors. This is Large ribosomal subunit protein uL10 from Mycolicibacterium gilvum (strain PYR-GCK) (Mycobacterium gilvum (strain PYR-GCK)).